We begin with the raw amino-acid sequence, 507 residues long: MKTRYFLLLGICMLSCRTDEKKQVQKEVDKPNVLFIAVDDLNNMISPIANFSNIQTPNFDRLAAMGVTFTDAHCPAPLCGPSRSAIMTGLRPSTTGIYGMTPDNKIRRDDNEATKDIIFLPEYFKKNGYHSMGIGKLFHNYAPDGMFDEGGGRVKGFGPFPEKRFVWDGFGTSKSRKGQYGRTNTDWGAFPESDTLMPDHQAVNWVLERFNKNYKQPFFLALGFQRPHVPLYVPQKWFDLYPLESIQTPPYQSDDLNDIPPVGLKINDLPMMPSTEWAINSGEWKKIIQAYLACVSFVDYELGRVLDALKNSPYAKNTIIVLWSDHGYRLGEKGTFAKHALWESATKAPLFFAGPNLPKGKKIDAPVEMLSIYPTLLELSGLQAYARNEAKSLVRMMQKNEGLKDTYAITTYGKNNHAVKVDGYRYIQYEDGTEEFYDNASDPNEWINEANNFKFKSKIEALKALLPKTNATWDAESNYTFQPYFVEQKTRGNVNAAKAVKVIGAER.

The N-terminal stretch at 1–18 (MKTRYFLLLGICMLSCRT) is a signal peptide. D39, D40, and C79 together coordinate Ca(2+). C79 acts as the Nucleophile in catalysis. Residue C79 is modified to 3-oxoalanine (Cys). H139 is an active-site residue. Residues D325 and H326 each contribute to the Ca(2+) site.

This sequence belongs to the sulfatase family. Ca(2+) serves as cofactor. The conversion to 3-oxoalanine (also known as C-formylglycine, FGly), of a serine or cysteine residue in prokaryotes and of a cysteine residue in eukaryotes, is critical for catalytic activity. This post-translational modification is severely defective in multiple sulfatase deficiency (MSD).

The protein resides in the periplasm. Functionally, sulfatase that may be involved in ulvan degradation. Ulvan is the main polysaccharide component of the Ulvales (green seaweed) cell wall. It is composed of disaccharide building blocks comprising 3-sulfated rhamnose (Rha3S) linked to D-glucuronic acid (GlcA), L-iduronic acid (IduA), or D-xylose (Xyl). Has no activity on different ulvan polymers. The chain is Sulfatase from Formosa agariphila (strain DSM 15362 / KCTC 12365 / LMG 23005 / KMM 3901 / M-2Alg 35-1).